The following is a 37-amino-acid chain: GKFSVFSKILRSIAKVFKGVGKVRKQFKTASDLDKNQ.

Expressed by the venom gland.

The protein resides in the secreted. In terms of biological role, disrupts biological membranes, particularly those rich in phosphocholine. Has antimicrobial activity against Gram-negative bacterium E.coli, Gram-positive bacteria B.subtilis and S.aureus, and hemolytic activity against sheep, pig and guinea pig red blood cells. Has insecticidal activity against S.frugiperda ovarian cells by opening non-selective ion channels. Enhances the insecticidal activity of spider venom neurotoxic peptides. In Oxyopes takobius (Lynx spider), this protein is M-oxotoxin-Ot2d.